We begin with the raw amino-acid sequence, 316 residues long: uncharacterized protein (316 aa).

The Cytoplasmic portion of the chain corresponds to 1–70 (SFAYSGNSES…NNDEIGIWNY (70 aa)). The helical transmembrane segment at 71–91 (ISVAEMGGVLLFLSYWIWTCL) threads the bilayer. Position 92 (His92) is a topological domain, lumenal. The chain crosses the membrane as a helical span at residues 93–113 (FSKIIFPAQKVICLYIFLFAL). Residues 114–170 (NQTLQECIEEYVFSSECIKYRQFYSVYEIIDFLRTNFYRLFVIYCALGFGITRTVPK) are Cytoplasmic-facing. A helical membrane pass occupies residues 171–191 (YLMIKGISIVIALCSVYWISL). Residues 192–194 (YKD) lie on the Lumenal side of the membrane. A helical transmembrane segment spans residues 195–215 (VYVVSEIFDMIQYEVSPAIWV). The Cytoplasmic portion of the chain corresponds to 216–245 (YSICHLLKQCTSVTTYENASKARFFRRMLN). Residues 246–266 (AFIFIFCASPMLHYLSNIIFG) form a helical membrane-spanning segment. Topologically, residues 267-316 (NFDYRLSVIIGDLFTFMEKIAFPCYIMFPTHNEALAYNRNVAEEAQEKMI) are lumenal.

This sequence belongs to the UPF0742 family.

It is found in the endoplasmic reticulum. The protein localises to the membrane. This is an uncharacterized protein from Schizosaccharomyces pombe (strain 972 / ATCC 24843) (Fission yeast).